A 484-amino-acid chain; its full sequence is Transcription factor MYB88 (484 aa).

A disordered region spans residues 1-20; sequence MEETTKQNNMKKKKKILLHS. The Nuclear localization signal signature appears at 13 to 20; sequence KKKILLHS. 2 consecutive HTH myb-type domains span residues 25-76 and 77-131; these read KKER…YTYL and NSDF…KKRA. DNA-binding regions (H-T-H motif) lie at residues 53–76 and 104–127; these read WAIIASKFNDKSTRQCRRRWYTYL and WTEIAKVVSGRTDNAVKNRFTTLC. Disordered regions lie at residues 215–241, 321–383, and 458–484; these read NATSSDGTEEQKQIGNVKESDGEDKSN, RSSN…GGEL, and GVESPSPYPSANPSQPPPCKRVLLDSL. Residues 232-241 are compositionally biased toward basic and acidic residues; the sequence is KESDGEDKSN. Residues 339 to 348 show a composition bias toward low complexity; sequence SPASSEYSSG. Polar residues predominate over residues 354 to 380; that stretch reads TIMTHPSGDKTQQLMSDTQTTSHQQNG. Pro residues predominate over residues 463-476; the sequence is SPYPSANPSQPPPC.

As to quaternary structure, interacts with RBR1. Expressed at low levels in all organs including roots, leaves, hypocotyls stems, flowers, siliques and buds.

The protein resides in the nucleus. Transcription factor that binds to DNA in promoters cis-regulatory element 5'-GGCGCGC-3' of cell cycle genes, including cyclins, cyclin-dependent kinases (CDKs), and components of the pre-replication complex. Binds to DNA in promoters cis-regulatory element 5'-AGCCG-3' of auxin regulated genes (e.g. PIN3 and PIN7). Together with FAMA and MYB124, ensures that stomata contain just two guard cells (GCs) by enforcing a single symmetric precursor cell division before stomatal maturity. Represses the expression of the mitosis-inducing factors CDKB1-1 and CDKA-1, specifically required for the last guard mother cells (GMC) symmetric divisions in the stomatal pathway. Represses CYCA2-3 in newly formed guard cells. Together with MYB88, regulates stomata spacing by restricting divisions late in the stomatal cell lineage thus limiting the number of GMC divisions. In collaboration with CDKB1-1 and CDKB1-2, restrict the G1/S transition and chloroplast and nuclear number during stomatal formation, and normally maintain fate and developmental progression throughout the stomatal cell lineage. Involved in sensing and/or transducing abiotic stress (e.g. drought and salt), probably via the positive regulation of NAC019. Regulates female reproduction being required for entry into megasporogenesis, probably via the regulation of cell cycle genes. Plays a minor role in lateral roots (LRs) initiation. Involved complementarily in establishing the gravitropic set-point angles of lateral roots by regulating the transcription of PIN3 and PIN7 in gravity-sensing cells of primary and lateral roots. The protein is Transcription factor MYB88 of Arabidopsis thaliana (Mouse-ear cress).